The chain runs to 504 residues: Probable alpha-L-arabinofuranosidase C (504 aa).

Residues N152, N181, and N269 are each glycosylated (N-linked (GlcNAc...) asparagine).

The protein belongs to the glycosyl hydrolase 51 family.

It is found in the secreted. It catalyses the reaction Hydrolysis of terminal non-reducing alpha-L-arabinofuranoside residues in alpha-L-arabinosides.. It participates in glycan metabolism; L-arabinan degradation. Alpha-L-arabinofuranosidase involved in the degradation of arabinoxylan, a major component of plant hemicellulose. Acts only on small linear 1,5-alpha-linked L-arabinofuranosyl oligosaccharides. The chain is Probable alpha-L-arabinofuranosidase C (abfC) from Aspergillus flavus (strain ATCC 200026 / FGSC A1120 / IAM 13836 / NRRL 3357 / JCM 12722 / SRRC 167).